A 612-amino-acid chain; its full sequence is tRNA uridine 5-carboxymethylaminomethyl modification enzyme MnmG (612 aa).

An FAD-binding site is contributed by 9 to 14; sequence GAGHAG. Residue 270 to 284 coordinates NAD(+); sequence GPLYCPSIEDKVFKF.

Belongs to the MnmG family. In terms of assembly, homodimer. Heterotetramer of two MnmE and two MnmG subunits. The cofactor is FAD.

It is found in the cytoplasm. In terms of biological role, NAD-binding protein involved in the addition of a carboxymethylaminomethyl (cmnm) group at the wobble position (U34) of certain tRNAs, forming tRNA-cmnm(5)s(2)U34. The sequence is that of tRNA uridine 5-carboxymethylaminomethyl modification enzyme MnmG from Mycoplasma genitalium (strain ATCC 33530 / DSM 19775 / NCTC 10195 / G37) (Mycoplasmoides genitalium).